The primary structure comprises 181 residues: Cytochrome P450 monooxygenase dtpC (181 aa).

A heme-binding site is contributed by Cys125.

This sequence belongs to the cytochrome P450 family. Heme is required as a cofactor.

Its pathway is alkaloid biosynthesis. The protein operates within secondary metabolite biosynthesis. Its function is as follows. Cytochrome P450 monooxygenase; part of the gene cluster that mediates the biosynthesis of the dimeric diketopiperazine alkaloid ditryptophenaline. The nonribosomal peptide synthase dtpA accepts L-tryptophan and L-phenylalanine as its substrates and forms the phenylalanyl-tryptophanyl cyclic dipeptide product cyclophenylalanyltryptophenyl. The N-methyltransferase dtpB is responsible for the N-methylation of cyclophenylalanyltryptophenyl to yield cyclo-N-methylphenylalanyltryptophenyl. The cytochrome P450 monooxygenase is responsible not only for pyrroloindole ring formation but also for concurrent dimerization of N-methylphenylalanyltryptophanyl diketopiperazine monomers into a homodimeric product. The protein is Cytochrome P450 monooxygenase dtpC of Aspergillus flavus (strain ATCC 200026 / FGSC A1120 / IAM 13836 / NRRL 3357 / JCM 12722 / SRRC 167).